Consider the following 445-residue polypeptide: MAAPEERDLTQEQTEKLLQFQDLTGIESMDQCRHTLEQHNWNIEAAVQDRLNEQEGVPSVFNPPPSRPLQVNTADHRIYSYVVSRPQPRGLLGWGYYLIMLPFRFTYYTILDIFRFALRFIRPDPRNRVTDPVGDIVSFMHSFEEKYGRAHPVFYLGTYSQALNDAKRELRFLLVYLHGDDHQDSDEFCRNTLCAPEVISLINTRMLFWACSTNKPEGYRVSQALRENTYPFLAMIMLKDRRMTVVGRLEGLIQPDDLINQLTFIMDANQTYLVSERLEREERNQTQVLRQQQDEAYLASLRADQEKERKKREERERKRRKEEEVQQQKLAEERRRRNLQEEKERKLECLPPEPSPDDPESVKIIFKLPNDSRVERRFHFSQSLTVIHDFLFSLKESPEKFQIEANFPRRVLPCLPSEEWPNPPTLQEAGLSHTEVLFVQDLTDE.

An N-acetylalanine modification is found at Ala-2. The UBA domain maps to 12–48 (EQTEKLLQFQDLTGIESMDQCRHTLEQHNWNIEAAVQ). The residue at position 167 (Lys-167) is an N6-acetyllysine. Positions 275-350 (SERLEREERN…EEKERKLECL (76 aa)) form a coiled coil. A disordered region spans residues 299-361 (ASLRADQEKE…PEPSPDDPES (63 aa)). Over residues 303-348 (ADQEKERKKREERERKRRKEEEVQQQKLAEERRRRNLQEEKERKLE) the composition is skewed to basic and acidic residues. In terms of domain architecture, UBX spans 357–439 (DDPESVKIIF…GLSHTEVLFV (83 aa)).

As to quaternary structure, identified in a complex that contains SEL1L, OS9, FAF2/UBXD8, UBE2J1/UBC6E and AUP1. Interacts with YOD1. Interacts (via N-terminus) with UBQLN2 (via C-terminus). Interacts with PNPLA2 and UBAC2. Interacts with ZFAND2B; probably through VCP. Interacts with LMBR1L.

It localises to the cytoplasm. Its subcellular location is the lipid droplet. It is found in the endoplasmic reticulum. Functionally, plays an important role in endoplasmic reticulum-associated degradation (ERAD) that mediates ubiquitin-dependent degradation of misfolded endoplasmic reticulum proteins. By controlling the steady-state expression of the IGF1R receptor, indirectly regulates the insulin-like growth factor receptor signaling pathway. Involved in inhibition of lipid droplet degradation by binding to phospholipase PNPL2 and inhibiting its activity by promoting dissociation of PNPL2 from its endogenous activator, ABHD5 which inhibits the rate of triacylglycerol hydrolysis. Involved in stress granule disassembly: associates with ubiquitinated G3BP1 in response to heat shock, thereby promoting interaction between ubiquitinated G3BP1 and VCP, followed by G3BP1 extraction from stress granules and stress granule disassembly. The chain is FAS-associated factor 2 (FAF2) from Bos taurus (Bovine).